The chain runs to 403 residues: 4-hydroxy-3-methylbut-2-enyl diphosphate reductase (403 aa).

A [4Fe-4S] cluster-binding site is contributed by Cys-66. His-96 contributes to the (2E)-4-hydroxy-3-methylbut-2-enyl diphosphate binding site. Dimethylallyl diphosphate is bound at residue His-96. His-96 contributes to the isopentenyl diphosphate binding site. Cys-157 serves as a coordination point for [4Fe-4S] cluster. Position 185 (His-185) interacts with (2E)-4-hydroxy-3-methylbut-2-enyl diphosphate. His-185 serves as a coordination point for dimethylallyl diphosphate. His-185 is a binding site for isopentenyl diphosphate. The active-site Proton donor is Glu-187. Thr-250 is a (2E)-4-hydroxy-3-methylbut-2-enyl diphosphate binding site. Cys-288 is a binding site for [4Fe-4S] cluster. The (2E)-4-hydroxy-3-methylbut-2-enyl diphosphate site is built by Ser-317, Ser-318, Asn-319, and Ser-379. 4 residues coordinate dimethylallyl diphosphate: Ser-317, Ser-318, Asn-319, and Ser-379. Isopentenyl diphosphate is bound by residues Ser-317, Ser-318, Asn-319, and Ser-379.

This sequence belongs to the IspH family. It depends on [4Fe-4S] cluster as a cofactor.

The enzyme catalyses isopentenyl diphosphate + 2 oxidized [2Fe-2S]-[ferredoxin] + H2O = (2E)-4-hydroxy-3-methylbut-2-enyl diphosphate + 2 reduced [2Fe-2S]-[ferredoxin] + 2 H(+). The catalysed reaction is dimethylallyl diphosphate + 2 oxidized [2Fe-2S]-[ferredoxin] + H2O = (2E)-4-hydroxy-3-methylbut-2-enyl diphosphate + 2 reduced [2Fe-2S]-[ferredoxin] + 2 H(+). The protein operates within isoprenoid biosynthesis; dimethylallyl diphosphate biosynthesis; dimethylallyl diphosphate from (2E)-4-hydroxy-3-methylbutenyl diphosphate: step 1/1. It functions in the pathway isoprenoid biosynthesis; isopentenyl diphosphate biosynthesis via DXP pathway; isopentenyl diphosphate from 1-deoxy-D-xylulose 5-phosphate: step 6/6. In terms of biological role, catalyzes the conversion of 1-hydroxy-2-methyl-2-(E)-butenyl 4-diphosphate (HMBPP) into a mixture of isopentenyl diphosphate (IPP) and dimethylallyl diphosphate (DMAPP). Acts in the terminal step of the DOXP/MEP pathway for isoprenoid precursor biosynthesis. The protein is 4-hydroxy-3-methylbut-2-enyl diphosphate reductase of Rippkaea orientalis (strain PCC 8801 / RF-1) (Cyanothece sp. (strain PCC 8801)).